A 211-amino-acid chain; its full sequence is Guanylate kinase (211 aa).

Positions 5 to 185 constitute a Guanylate kinase-like domain; the sequence is GLLLILSSPS…AEEQLKMILS (181 aa). Position 12–19 (12–19) interacts with ATP; it reads SPSGAGKS.

This sequence belongs to the guanylate kinase family.

The protein localises to the cytoplasm. The catalysed reaction is GMP + ATP = GDP + ADP. Functionally, essential for recycling GMP and indirectly, cGMP. The protein is Guanylate kinase of Cereibacter sphaeroides (strain ATCC 17023 / DSM 158 / JCM 6121 / CCUG 31486 / LMG 2827 / NBRC 12203 / NCIMB 8253 / ATH 2.4.1.) (Rhodobacter sphaeroides).